Reading from the N-terminus, the 166-residue chain is MRDRPVTLAAITGAHGVAGEVRLKLFGEGVAALKRYRAFNDSGDGSGLTVVKIKDDGKGGAIARFAEVPDRTAAEKLRGTALTVRRSELPSLPEGEYYHADLIGLPAVSTEGEMLGECIAVENFGAGDVIEIRKADGKKFMVPMKTEAVPEWTDERIVIEAAYADQ.

A PRC barrel domain is found at Glu-94–Gln-166.

The protein belongs to the RimM family. In terms of assembly, binds ribosomal protein uS19.

Its subcellular location is the cytoplasm. Its function is as follows. An accessory protein needed during the final step in the assembly of 30S ribosomal subunit, possibly for assembly of the head region. Essential for efficient processing of 16S rRNA. May be needed both before and after RbfA during the maturation of 16S rRNA. It has affinity for free ribosomal 30S subunits but not for 70S ribosomes. This is Ribosome maturation factor RimM from Novosphingobium aromaticivorans (strain ATCC 700278 / DSM 12444 / CCUG 56034 / CIP 105152 / NBRC 16084 / F199).